The primary structure comprises 594 residues: MEFPGSSDNYLTITGPGHPFLTGTETFHTPSLGDEEFEIPPISLDSDPSLAVSDVVGHFDDLADSSGVQDEGFAAQYGVQTLDMPVEMAHEVMDQTGGLLGAGLAMDLDHPIVTPYSANPPVTIDVSMTDMSSGILGHGQLTTIDQSELSSQLGLSLGGGTILHPVQSPDDHLSPTPSPTSSLHDEDMEDFRRITAPKSIIVEQTKKPKTPKKKKKKDPNEPQKPLSAYALFFRDTQAAIKGQNPNATFGEVSKIVASMWDSLGEEQKQVYKRKTEAAKKEYLKALALYKANQLSQVAVDTVDLDPPAVPALLSESPVPSPTVVTATSIPECVSSPSVSSSPSQTVAAPQQSIAKIIISKQILPAGQGSTAIAMSQGMVTVIPATVVTSRGLPLAQLQPSPQAQRITRSVLQAAMQMPPRLQPPPLQQMQQPPRLLQMAPAQQPSITILQAPPPLQPMQKVRLSLQPPPLQIKIIPPPLQPQPQVVQVQNQSLSVINVPASPEAPASPPEQLEVLPEVVQEESPPPQMDVELVSSSPPPSLSPQCVRSGCENPPVECKDWDNEYCSNECVVKHCRDTFMSWIATRSQGTLAPVK.

Disordered stretches follow at residues G160–P225 and E522–C545. The segment covering K207–K217 has biased composition (basic residues). The short motif at K212–K217 is the Nuclear localization signal element. Positions P222–K290 form a DNA-binding region, HMG box.

Component of the PNUTS-PP1 phosphatase complex.

The protein localises to the nucleus. Its subcellular location is the chromosome. Functionally, transcription factor that modulates cell fate reprogramming from the somatic state to the pluripotent and neuronal fate. Also acts as a regulatory component of protein phosphatase 1 (PP1) complexes. Component of the PNUTS-PP1 protein phosphatase complex, a PP1 complex that regulates RNA polymerase II transcription pause-release. PNUTS-PP1 also plays a role in the control of chromatin structure and cell cycle progression during the transition from mitosis into interphase. This is TOX high mobility group box family member 4-B (tox4-b) from Xenopus laevis (African clawed frog).